The sequence spans 409 residues: Dihydrolipoyllysine-residue succinyltransferase component of 2-oxoglutarate dehydrogenase complex (409 aa).

Residues 2–77 form the Lipoyl-binding domain; sequence AIEILVPDLP…VSKQLLGKIS (76 aa). Lys-43 carries the N6-lipoyllysine modification. Polar residues predominate over residues 83–107; sequence DVSSATLKATNEPTPSDRQNAAIEN. A disordered region spans residues 83–114; that stretch reads DVSSATLKATNEPTPSDRQNAAIENSHNHNAD. A Peripheral subunit-binding (PSBD) domain is found at 114–151; sequence DQSPVIRRLLAEHDLQADQIQGSGVGGRLTREDIEREI. Active-site residues include His-380 and Asp-384.

This sequence belongs to the 2-oxoacid dehydrogenase family. Forms a 24-polypeptide structural core with octahedral symmetry. Part of the 2-oxoglutarate dehydrogenase (OGDH) complex composed of E1 (2-oxoglutarate dehydrogenase), E2 (dihydrolipoamide succinyltransferase) and E3 (dihydrolipoamide dehydrogenase); the complex contains multiple copies of the three enzymatic components (E1, E2 and E3). The cofactor is (R)-lipoate.

The enzyme catalyses N(6)-[(R)-dihydrolipoyl]-L-lysyl-[protein] + succinyl-CoA = N(6)-[(R)-S(8)-succinyldihydrolipoyl]-L-lysyl-[protein] + CoA. It participates in amino-acid degradation; L-lysine degradation via saccharopine pathway; glutaryl-CoA from L-lysine: step 6/6. E2 component of the 2-oxoglutarate dehydrogenase (OGDH) complex which catalyzes the second step in the conversion of 2-oxoglutarate to succinyl-CoA and CO(2). This chain is Dihydrolipoyllysine-residue succinyltransferase component of 2-oxoglutarate dehydrogenase complex (sucB), found in Haemophilus influenzae (strain ATCC 51907 / DSM 11121 / KW20 / Rd).